We begin with the raw amino-acid sequence, 189 residues long: Mediator of RNA polymerase II transcription subunit 28 (189 aa).

Positions 75–115 (YMLIKDENQDLSIEIQRKEALLQKHYNRLEEWKACLSDIQQ) form a coiled coil. The disordered stretch occupies residues 124-147 (PIGSGMLQGPGGGMPPMGGTPPRP). Over residues 129-139 (MLQGPGGGMPP) the composition is skewed to gly residues.

This sequence belongs to the Mediator complex subunit 28 family. Component of the Mediator complex, which includes at least CDK8, MED4, MED6, MED11, MED14, MED17, MED18, MED20, MED21, MED22, MED27, MED28, MED30 and MED31.

Its subcellular location is the nucleus. Its function is as follows. Component of the Mediator complex, a coactivator involved in the regulated transcription of nearly all RNA polymerase II-dependent genes. Mediator functions as a bridge to convey information from gene-specific regulatory proteins to the basal RNA polymerase II transcription machinery. Mediator is recruited to promoters by direct interactions with regulatory proteins and serves as a scaffold for the assembly of a functional preinitiation complex with RNA polymerase II and the general transcription factors. This chain is Mediator of RNA polymerase II transcription subunit 28 (MED28), found in Drosophila melanogaster (Fruit fly).